The primary structure comprises 177 residues: NAD(P)H-quinone oxidoreductase subunit 6, chloroplastic (177 aa).

Transmembrane regions (helical) follow at residues 10-30, 32-52, 61-81, 93-115, and 152-172; these read ILLVSLGSGIILGSLGVVLLT, PIYSAFSSGLVLVRISLFHIL, AQLLIYVGAINVLIIFAVMFM, WTVGDGISSVVCTSILFSLIATI, and FFLPFELISIILLVALVGAIA.

This sequence belongs to the complex I subunit 6 family. In terms of assembly, NDH is composed of at least 16 different subunits, 5 of which are encoded in the nucleus.

Its subcellular location is the plastid. It localises to the chloroplast thylakoid membrane. It carries out the reaction a plastoquinone + NADH + (n+1) H(+)(in) = a plastoquinol + NAD(+) + n H(+)(out). It catalyses the reaction a plastoquinone + NADPH + (n+1) H(+)(in) = a plastoquinol + NADP(+) + n H(+)(out). Its function is as follows. NDH shuttles electrons from NAD(P)H:plastoquinone, via FMN and iron-sulfur (Fe-S) centers, to quinones in the photosynthetic chain and possibly in a chloroplast respiratory chain. The immediate electron acceptor for the enzyme in this species is believed to be plastoquinone. Couples the redox reaction to proton translocation, and thus conserves the redox energy in a proton gradient. The protein is NAD(P)H-quinone oxidoreductase subunit 6, chloroplastic (ndhG) of Amborella trichopoda.